Reading from the N-terminus, the 185-residue chain is Large ribosomal subunit protein uL5 (185 aa).

It belongs to the universal ribosomal protein uL5 family. As to quaternary structure, part of the 50S ribosomal subunit; part of the 5S rRNA/L5/L18/L25 subcomplex. Contacts the 5S rRNA and the P site tRNA. Forms a bridge to the 30S subunit in the 70S ribosome.

In terms of biological role, this is one of the proteins that bind and probably mediate the attachment of the 5S RNA into the large ribosomal subunit, where it forms part of the central protuberance. In the 70S ribosome it contacts protein S13 of the 30S subunit (bridge B1b), connecting the 2 subunits; this bridge is implicated in subunit movement. Contacts the P site tRNA; the 5S rRNA and some of its associated proteins might help stabilize positioning of ribosome-bound tRNAs. The protein is Large ribosomal subunit protein uL5 of Rhizobium etli (strain CIAT 652).